The primary structure comprises 444 residues: Tol-Pal system protein TolB (444 aa).

An N-terminal signal peptide occupies residues 1 to 19; it reads MRNIIYFILSLLFSVTSYA.

The protein belongs to the TolB family. As to quaternary structure, the Tol-Pal system is composed of five core proteins: the inner membrane proteins TolA, TolQ and TolR, the periplasmic protein TolB and the outer membrane protein Pal. They form a network linking the inner and outer membranes and the peptidoglycan layer.

It localises to the periplasm. Part of the Tol-Pal system, which plays a role in outer membrane invagination during cell division and is important for maintaining outer membrane integrity. The sequence is that of Tol-Pal system protein TolB from Rickettsia rickettsii (strain Sheila Smith).